An 864-amino-acid chain; its full sequence is Leucine--tRNA ligase (864 aa).

The 'HIGH' region motif lies at 42 to 52; that stretch reads PYPSGKLHMGH. Residues 624-628 carry the 'KMSKS' region motif; it reads KMSKS. Lysine 627 provides a ligand contact to ATP.

Belongs to the class-I aminoacyl-tRNA synthetase family.

It localises to the cytoplasm. It carries out the reaction tRNA(Leu) + L-leucine + ATP = L-leucyl-tRNA(Leu) + AMP + diphosphate. This Paraburkholderia phymatum (strain DSM 17167 / CIP 108236 / LMG 21445 / STM815) (Burkholderia phymatum) protein is Leucine--tRNA ligase.